The chain runs to 132 residues: uncharacterized protein (132 aa).

The disordered stretch occupies residues 68–91 (WSRTSPNSSRSSPRSPASMASTSS).

This is an uncharacterized protein from Streptomyces cacaoi.